The chain runs to 37 residues: Photosystem I reaction center subunit VIII (37 aa).

The helical transmembrane segment at 10-30 (IFVPLVGLVFPAIAMASLSLY) threads the bilayer.

It belongs to the PsaI family.

Its subcellular location is the plastid. It localises to the chloroplast thylakoid membrane. In terms of biological role, may help in the organization of the PsaL subunit. This chain is Photosystem I reaction center subunit VIII, found in Gossypium hirsutum (Upland cotton).